The chain runs to 142 residues: Large ribosomal subunit protein uL11 (142 aa).

This sequence belongs to the universal ribosomal protein uL11 family. Part of the ribosomal stalk of the 50S ribosomal subunit. Interacts with L10 and the large rRNA to form the base of the stalk. L10 forms an elongated spine to which L12 dimers bind in a sequential fashion forming a multimeric L10(L12)X complex. In terms of processing, one or more lysine residues are methylated.

Forms part of the ribosomal stalk which helps the ribosome interact with GTP-bound translation factors. This Brucella abortus (strain S19) protein is Large ribosomal subunit protein uL11.